A 707-amino-acid polypeptide reads, in one-letter code: D-(-)-3-hydroxybutyrate oligomer hydrolase (707 aa).

A signal peptide spans 1 to 32 (MASVFKVRSASGHVPVVRTLAAMMAVTVVLTA). The Charge relay system role is filled by serine 321.

This sequence belongs to the D-(-)-3-hydroxybutyrate oligomer hydrolase family.

It localises to the secreted. It carries out the reaction (3R)-hydroxybutanoate dimer + H2O = 2 (R)-3-hydroxybutanoate + H(+). Its pathway is lipid metabolism; butanoate metabolism. Functionally, participates in the degradation of poly-3-hydroxybutyrate (PHB). It works downstream of poly(3-hydroxybutyrate) depolymerase, hydrolyzing D(-)-3-hydroxybutyrate oligomers of various length (3HB-oligomers) into 3HB-monomers. The polypeptide is D-(-)-3-hydroxybutyrate oligomer hydrolase (Paraburkholderia xenovorans (strain LB400)).